Consider the following 75-residue polypeptide: Tautomerase PptA (75 aa).

The active-site Proton acceptor; via imino nitrogen is the Pro-2.

It belongs to the 4-oxalocrotonate tautomerase family. PptA subfamily. Homodimer.

The protein localises to the cytoplasm. The sequence is that of Tautomerase PptA from Escherichia coli O127:H6 (strain E2348/69 / EPEC).